A 148-amino-acid polypeptide reads, in one-letter code: Large ribosomal subunit protein uL15 (148 aa).

A disordered region spans residues 18–38 (GYGRVGKHRKHPGGRGNAGGL).

Belongs to the universal ribosomal protein uL15 family.

The sequence is that of Large ribosomal subunit protein uL15 (rpl27a) from Dictyostelium discoideum (Social amoeba).